Consider the following 602-residue polypeptide: Cytokine-like nuclear factor N-PAC (602 aa).

2 positions are modified to phosphoserine: serine 8 and serine 10. Residues proline 22–proline 81 form the PWWP domain. Residues glycine 162 to arginine 262 form a disordered region. Composition is skewed to polar residues over residues alanine 176 to valine 188, alanine 204 to serine 217, and serine 224 to serine 233. Phosphoserine occurs at positions 224, 228, and 243. The tract at residues arginine 309 to phenylalanine 602 is dehydrogenase domain. NAD(+)-binding positions include glycine 319 to aspartate 333, threonine 411, and arginine 554.

This sequence belongs to the HIBADH-related family. NP60 subfamily. In terms of assembly, binds to mononucleosomes. Interacts with male-specific lethal (MSL) histone acetyltransferase complex at least composed of mof, msl-1, msl-2 and msl-3.

It localises to the chromosome. Functionally, nucleosome-destabilizing factor that is recruited to genes during transcriptional activation and colocalizes with a subset of trimethylated 'Lys-36' histone H3 (H3K36me3)-enriched regions. Binds DNA (in vitro). Facilitates Pol II transcription through nucleosomes. Facilitates male-specific lethal (MSL) histone acetyltransferase complex targeting to active genes on the X chromosome. Stimulates the acetylation of 'Lys-56' of nucleosomal histone H3 (H3K56ac) by nej. May have oxidoreductase activity. The chain is Cytokine-like nuclear factor N-PAC from Drosophila melanogaster (Fruit fly).